Reading from the N-terminus, the 91-residue chain is Small ribosomal subunit protein bS20 (91 aa).

A compositionally biased stretch (basic and acidic residues) spans Met-1–Asn-18. The segment at Met-1–Lys-25 is disordered.

It belongs to the bacterial ribosomal protein bS20 family.

In terms of biological role, binds directly to 16S ribosomal RNA. The chain is Small ribosomal subunit protein bS20 from Chlorobium luteolum (strain DSM 273 / BCRC 81028 / 2530) (Pelodictyon luteolum).